The primary structure comprises 388 residues: MSLDINWSLLSQPDESATDQLSESLIALLNAQLAEAHRPSFIGPITVTAFDFGNAGPDLEVKDIRDVWRVFDQGDDEGDFAEEEKQREKEREERDKLRNEALKSSLDGERYELVDRYSSTEGTSSFEYQPEYDIHEQHGDDYRIRGRRPLSYTFGYPHDRLAVHRSSSSRSFIPFPFDHPPPALHIPSTPGLNPSLVSHPISARFSRRPMSIAASAAPRPTPRRRPIEPSSTSPSPPAHPAGLPPKASSSSIPSLQLHLRLSHASDLHLTLLTSLQVNYPSALFMALPLKLSITGFQLNADIVMAYSGEKNRVHLTIVDDESNPAHKEDKQIPLGQRLLSNLQIESEIGHADAHVLRNVGKVERFIVDVVRKTLVDELVFPNFHTVAL.

One can recognise an SMP-LTD domain in the interval 1–388; it reads MSLDINWSLL…VFPNFHTVAL (388 aa). Disordered stretches follow at residues 75–101 and 209–251; these read DDEG…RNEA and PMSI…SSSS. Residues 83 to 101 are compositionally biased toward basic and acidic residues; the sequence is EEKQREKEREERDKLRNEA. The span at 234 to 243 shows a compositional bias: pro residues; the sequence is PSPPAHPAGL.

Belongs to the MDM12 family. Component of the ER-mitochondria encounter structure (ERMES) or MDM complex, composed of MMM1, MDM10, MDM12 and MDM34. An MMM1 homodimer associates with one molecule of MDM12 on each side in a pairwise head-to-tail manner, and the SMP-LTD domains of MMM1 and MDM12 generate a continuous hydrophobic tunnel for phospholipid trafficking.

The protein resides in the mitochondrion outer membrane. Its subcellular location is the endoplasmic reticulum membrane. Component of the ERMES/MDM complex, which serves as a molecular tether to connect the endoplasmic reticulum (ER) and mitochondria. Components of this complex are involved in the control of mitochondrial shape and protein biogenesis, and function in nonvesicular lipid trafficking between the ER and mitochondria. MDM12 is required for the interaction of the ER-resident membrane protein MMM1 and the outer mitochondrial membrane-resident beta-barrel protein MDM10. The MDM12-MMM1 subcomplex functions in the major beta-barrel assembly pathway that is responsible for biogenesis of all mitochondrial outer membrane beta-barrel proteins, and acts in a late step after the SAM complex. The MDM10-MDM12-MMM1 subcomplex further acts in the TOM40-specific pathway after the action of the MDM12-MMM1 complex. Essential for establishing and maintaining the structure of mitochondria and maintenance of mtDNA nucleoids. The chain is Mitochondrial distribution and morphology protein 12 from Cryptococcus neoformans var. neoformans serotype D (strain B-3501A) (Filobasidiella neoformans).